We begin with the raw amino-acid sequence, 330 residues long: Elongation factor Ts, mitochondrial (330 aa).

The transit peptide at 1 to 16 (MYRNCRKAFTFSLRHY) directs the protein to the mitochondrion.

The protein belongs to the EF-Ts family.

It localises to the mitochondrion. In terms of biological role, associates with the EF-Tu.GDP complex and induces the exchange of GDP to GTP. It remains bound to the aminoacyl-tRNA.EF-Tu.GTP complex up to the GTP hydrolysis stage on the ribosome. This Laccaria bicolor (strain S238N-H82 / ATCC MYA-4686) (Bicoloured deceiver) protein is Elongation factor Ts, mitochondrial.